Consider the following 553-residue polypeptide: uncharacterized protein (553 aa).

The next 2 membrane-spanning stretches (helical) occupy residues 6 to 26 (IKIF…QVDA) and 524 to 544 (SYWI…GYVF).

To M.jannaschii MJ0795 and MJ1506.

Its subcellular location is the cell membrane. This is an uncharacterized protein from Methanocaldococcus jannaschii (strain ATCC 43067 / DSM 2661 / JAL-1 / JCM 10045 / NBRC 100440) (Methanococcus jannaschii).